The following is a 276-amino-acid chain: 3-methyl-2-oxobutanoate hydroxymethyltransferase (276 aa).

The Mg(2+) site is built by Asp49 and Asp88. Residues 49 to 50 (DS), Asp88, and Lys118 contribute to the 3-methyl-2-oxobutanoate site. Residue Glu120 coordinates Mg(2+). The Proton acceptor role is filled by Glu187.

The protein belongs to the PanB family. As to quaternary structure, homodecamer; pentamer of dimers. It depends on Mg(2+) as a cofactor.

The protein resides in the cytoplasm. It carries out the reaction 3-methyl-2-oxobutanoate + (6R)-5,10-methylene-5,6,7,8-tetrahydrofolate + H2O = 2-dehydropantoate + (6S)-5,6,7,8-tetrahydrofolate. It functions in the pathway cofactor biosynthesis; (R)-pantothenate biosynthesis; (R)-pantoate from 3-methyl-2-oxobutanoate: step 1/2. Its function is as follows. Catalyzes the reversible reaction in which hydroxymethyl group from 5,10-methylenetetrahydrofolate is transferred onto alpha-ketoisovalerate to form ketopantoate. In Afipia carboxidovorans (strain ATCC 49405 / DSM 1227 / KCTC 32145 / OM5) (Oligotropha carboxidovorans), this protein is 3-methyl-2-oxobutanoate hydroxymethyltransferase.